Reading from the N-terminus, the 185-residue chain is Ribosome-recycling factor (185 aa).

This sequence belongs to the RRF family.

The protein localises to the cytoplasm. Functionally, responsible for the release of ribosomes from messenger RNA at the termination of protein biosynthesis. May increase the efficiency of translation by recycling ribosomes from one round of translation to another. This Nitrosomonas eutropha (strain DSM 101675 / C91 / Nm57) protein is Ribosome-recycling factor.